The sequence spans 342 residues: Phenylalanine--tRNA ligase alpha subunit (342 aa).

Glutamate 257 provides a ligand contact to Mg(2+).

The protein belongs to the class-II aminoacyl-tRNA synthetase family. Phe-tRNA synthetase alpha subunit type 1 subfamily. As to quaternary structure, tetramer of two alpha and two beta subunits. Mg(2+) is required as a cofactor.

It is found in the cytoplasm. The enzyme catalyses tRNA(Phe) + L-phenylalanine + ATP = L-phenylalanyl-tRNA(Phe) + AMP + diphosphate + H(+). In Legionella pneumophila subsp. pneumophila (strain Philadelphia 1 / ATCC 33152 / DSM 7513), this protein is Phenylalanine--tRNA ligase alpha subunit.